A 742-amino-acid polypeptide reads, in one-letter code: Two pore calcium channel protein 1 (742 aa).

The segment at 1-37 is disordered; sequence MSEAEAPLITEEAAERGLASSGSRRLSDGAGGQGSRK. Residues 1-82 are Cytoplasmic-facing; sequence MSEAEAPLIT…NDTRFGRAMS (82 aa). A helical transmembrane segment spans residues 83–103; the sequence is FYFVYLRLDWLWSLNLFALIL. Over 104–140 the chain is Extracellular; sequence LNFLEKPLWCRKDALQAYDQRDLYFLGQLPYFSKTES. A helical membrane pass occupies residues 141–161; that stretch reads LIYEGLTLVILVMDIFCPLSY. Over 162–176 the chain is Cytoplasmic; it reads EGLNIFWRSTTNKLK. A helical membrane pass occupies residues 177–197; that stretch reads IVLLFILACDILVFAFSSQPF. The Extracellular portion of the chain corresponds to 198-204; it reads RLAPYIR. Residues 205–226 traverse the membrane as a helical; Voltage-sensor segment; it reads VVFLIMTIRELRMCAITLAGLI. The helical transmembrane segment at 227–247 threads the bilayer; that stretch reads GTYLNVLALSLLFLLFASWLA. Topologically, residues 248-258 are extracellular; it reads YVTFEDTPQGK. Residues 259–273 constitute an intramembrane region (pore-forming); sequence TIFSSYGVTLYQMFV. Over 274 to 296 the chain is Extracellular; it reads LFTTSNNPDVWVHAYKIPRWYSL. Residues 297–317 form a helical membrane-spanning segment; sequence FFIVYVLLGVYFLTNLILAVI. The Cytoplasmic segment spans residues 318–446; it reads YDSFKEQFAK…SFVRSRMFEY (129 aa). EF-hand domains lie at 335–370 and 376–411; these read IRKN…LNKY and TSRE…IAIK. The helical transmembrane segment at 447–467 threads the bilayer; that stretch reads IIVFVLLINLVAVIIETTLDI. The Extracellular portion of the chain corresponds to 468-480; sequence ENSSSQETWQEVE. The N-linked (GlcNAc...) asparagine glycan is linked to N469. The helical transmembrane segment at 481–501 threads the bilayer; the sequence is FFLGWIYVAEMALKIFSLGFG. Residues 502 to 510 are Cytoplasmic-facing; the sequence is AYWMEGQNK. The helical transmembrane segment at 511–531 threads the bilayer; the sequence is FDFVLTWTIFIGETLTFAFPS. Over 532–540 the chain is Extracellular; it reads KLPFLSNGE. A helical; Voltage-sensor transmembrane segment spans residues 541-558; the sequence is WIRYLLLGRVLRLTRILL. Residues 559-582 are Cytoplasmic-facing; it reads QVQRFRAFVATFFTLMSSLMPYLG. A helical membrane pass occupies residues 583–603; the sequence is IVFCVLCMYCSIGLQIFGGIV. Residues 604–627 lie on the Extracellular side of the membrane; that stretch reads YAGNPTLEETDLFNNDYLLFNFND. Residues 628 to 642 constitute an intramembrane region (pore-forming); it reads YPSGMVTLFNLLVMG. Residues 643–663 lie on the Extracellular side of the membrane; sequence NWQVWMESYWQLTGTSWSLIY. Residues 664–684 form a helical membrane-spanning segment; the sequence is FVSFYLISILLLLNLIVAFVL. Residues 685 to 742 are Cytoplasmic-facing; the sequence is EAFFAEMELEKGEEVDIQNPTSGGIKKRRSMRVRSKGTMVDILLHHMLSNELDGSQNS.

The protein belongs to the calcium channel alpha-1 subunit (TC 1.A.1.11) family. Two pore calcium channel subfamily. In terms of assembly, homodimer.

It localises to the membrane. Inhibited by Al(3+). Functions as a voltage-gated inward-rectifying Ca(2+) channel (VDCC) across the plasma membrane that mediates sucrose-induced Ca(2+) influx in autotrophically grown leaf cells. Acts as the major ROS-responsive Ca(2+) channel and is the possible target of Al-dependent inhibition. Plays a regulatory role in defense responses. In Triticum aestivum (Wheat), this protein is Two pore calcium channel protein 1 (TPC1).